The primary structure comprises 207 residues: Putative 3-methyladenine DNA glycosylase (207 aa).

This sequence belongs to the DNA glycosylase MPG family.

The sequence is that of Putative 3-methyladenine DNA glycosylase from Burkholderia orbicola (strain MC0-3).